The sequence spans 152 residues: Protein-export protein SecB (152 aa).

The protein belongs to the SecB family. Homotetramer, a dimer of dimers. One homotetramer interacts with 1 SecA dimer.

It is found in the cytoplasm. In terms of biological role, one of the proteins required for the normal export of preproteins out of the cell cytoplasm. It is a molecular chaperone that binds to a subset of precursor proteins, maintaining them in a translocation-competent state. It also specifically binds to its receptor SecA. This Rickettsia peacockii (strain Rustic) protein is Protein-export protein SecB.